A 282-amino-acid polypeptide reads, in one-letter code: NADPH-dependent 7-cyano-7-deazaguanine reductase (282 aa).

88–90 (IES) serves as a coordination point for substrate. 90-91 (SK) lines the NADPH pocket. C190 (thioimide intermediate) is an active-site residue. D197 acts as the Proton donor in catalysis. 229–230 (HE) lines the substrate pocket. Residue 258 to 259 (RG) participates in NADPH binding.

This sequence belongs to the GTP cyclohydrolase I family. QueF type 2 subfamily. Homodimer.

Its subcellular location is the cytoplasm. The catalysed reaction is 7-aminomethyl-7-carbaguanine + 2 NADP(+) = 7-cyano-7-deazaguanine + 2 NADPH + 3 H(+). Its pathway is tRNA modification; tRNA-queuosine biosynthesis. Catalyzes the NADPH-dependent reduction of 7-cyano-7-deazaguanine (preQ0) to 7-aminomethyl-7-deazaguanine (preQ1). This Escherichia coli O81 (strain ED1a) protein is NADPH-dependent 7-cyano-7-deazaguanine reductase.